Reading from the N-terminus, the 338-residue chain is Palmitoyltransferase ZDHHC15 (338 aa).

The Cytoplasmic segment spans residues 1-20; it reads MLAGCRVALPRGLRCCQRVL. Residues 21 to 41 form a helical membrane-spanning segment; it reads SWVPVVIISLVVLWSYYAYVW. Residues 42 to 56 are Lumenal-facing; it reads ELCLVTVTNPAEKAA. A helical transmembrane segment spans residues 57 to 77; it reads YLLIFHTVFLLFIWTYWKAIF. Residues 78–172 lie on the Cytoplasmic side of the membrane; it reads TPPKQPTKKF…NNCIGYSNYK (95 aa). The DHHC domain occupies 129–179; that stretch reads RFCDTCQMVKPDRCHHCSVCGMCVLKMDHHCPWVNNCIGYSNYKFFLLFLA. Cys131, Cys134, His144, Cys145, Cys148, Cys151, and His158 together coordinate Zn(2+). The active-site S-palmitoyl cysteine intermediate is Cys159. Zn(2+) is bound at residue Cys165. A helical membrane pass occupies residues 173-193; the sequence is FFLLFLAYAMLYCLYIGCTVF. At 194 to 210 the chain is on the lumenal side; it reads QYFILYWTDTLSNGRAK. A helical transmembrane segment spans residues 211–234; the sequence is FHVLFLLFVALMFFISLMFLFGYH. The Cytoplasmic portion of the chain corresponds to 235 to 338; it reads CWLVSLNRTT…TSHITVHIEK (104 aa).

This sequence belongs to the DHHC palmitoyltransferase family. Autopalmitoylated (in vitro).

Its subcellular location is the golgi apparatus membrane. The protein resides in the postsynaptic density. The enzyme catalyses L-cysteinyl-[protein] + hexadecanoyl-CoA = S-hexadecanoyl-L-cysteinyl-[protein] + CoA. It catalyses the reaction L-cysteinyl-[protein] + tetradecanoyl-CoA = S-tetradecanoyl-L-cysteinyl-[protein] + CoA. It carries out the reaction L-cysteinyl-[protein] + octadecanoyl-CoA = S-octadecanoyl-L-cysteinyl-[protein] + CoA. Its function is as follows. Palmitoyltransferase that catalyzes the addition of palmitate onto various protein substrates. Has no stringent fatty acid selectivity and in addition to palmitate can also transfer onto target proteins myristate from tetradecanoyl-CoA and stearate from octadecanoyl-CoA. May thereby regulate target proteins association and localization to membranes. In the nervous system, probably catalyzes the palmitoylation of synaptic proteins and is involved in the differentiation of dopaminergic neurons and the development of the diencephalon. This chain is Palmitoyltransferase ZDHHC15 (zdhhc15), found in Xenopus laevis (African clawed frog).